The primary structure comprises 227 residues: MSLLLTVFLIVFVTQLISWIGQNVLLEWAYNLYLRLSRNSLAARQRSLKTEILNNKTELLKTSAQDQFAKWAKLRRSVDKGLAELEKLNSEIATAKSSFSTKFNAVIWALTSGVNLVIGWWYGRKAVFYLPEGWMGPLTWWFSFPFAPRGSVSVGVWSFACKRVLLVLERMVKELFFAETQAKEVPVGFSPSSSSSSTPNPMSKASSGSPSPRRRTTVTVESEDEKS.

At 1–3 (MSL) the chain is on the lumenal side. The chain crosses the membrane as a helical span at residues 4–23 (LLTVFLIVFVTQLISWIGQN). At 24–107 (VLLEWAYNLY…SFSTKFNAVI (84 aa)) the chain is on the cytoplasmic side. A coiled-coil region spans residues 72–96 (AKLRRSVDKGLAELEKLNSEIATAK). Residues 108 to 128 (WALTSGVNLVIGWWYGRKAVF) form a helical membrane-spanning segment. The Lumenal portion of the chain corresponds to 129 to 151 (YLPEGWMGPLTWWFSFPFAPRGS). The chain crosses the membrane as a helical span at residues 152–168 (VSVGVWSFACKRVLLVL). Over 169–227 (ERMVKELFFAETQAKEVPVGFSPSSSSSSTPNPMSKASSGSPSPRRRTTVTVESEDEKS) the chain is Cytoplasmic. Residues 184 to 227 (EVPVGFSPSSSSSSTPNPMSKASSGSPSPRRRTTVTVESEDEKS) form a disordered region. Over residues 190-211 (SPSSSSSSTPNPMSKASSGSPS) the composition is skewed to low complexity.

Belongs to the WRB/GET1 family. Interacts with GET3.

The protein localises to the endoplasmic reticulum membrane. Required for the post-translational delivery of tail-anchored (TA) proteins to the endoplasmic reticulum. Acts as a membrane receptor for soluble GET3, which recognizes and selectively binds the transmembrane domain of TA proteins in the cytosol. The polypeptide is Protein GET1 (Coprinopsis cinerea (strain Okayama-7 / 130 / ATCC MYA-4618 / FGSC 9003) (Inky cap fungus)).